A 1181-amino-acid chain; its full sequence is Integrin alpha-7 (1181 aa).

The N-terminal stretch at 1–33 (MAGARSRDPWGASGICYLFGSLLVELLFSRAVA) is a signal peptide. Over 34–1082 (FNLDVMGALR…MAVVAEGVPW (1049 aa)) the chain is Extracellular. FG-GAP repeat units lie at residues 35–103 (NLDV…ETDC), 110–175 (QGAD…IRDE), 185–238 (EGRP…SADL), 292–349 (DRLP…ASRL), 350–411 (VPEV…HWAG), 412–467 (ISPL…GVVA), and 471–530 (QVLE…IAPR). A glycan (N-linked (GlcNAc...) asparagine) is linked at asparagine 86. Intrachain disulfides connect cysteine 94/cysteine 103, cysteine 140/cysteine 163, and cysteine 184/cysteine 197. The Ca(2+) site is built by aspartate 372, asparagine 374, aspartate 376, aspartate 380, aspartate 434, asparagine 436, aspartate 438, aspartate 442, aspartate 492, aspartate 494, asparagine 496, tyrosine 498, and aspartate 500. Disulfide bonds link cysteine 539–cysteine 546, cysteine 552–cysteine 615, cysteine 681–cysteine 687, cysteine 781–cysteine 792, cysteine 939–cysteine 994, and cysteine 1001–cysteine 1006. N-linked (GlcNAc...) asparagine glycosylation is present at asparagine 786. The span at 950-961 (VDSRDRRRRELE) shows a compositional bias: basic and acidic residues. Positions 950–978 (VDSRDRRRRELEPPEQQEPGERQEPSMSW) are disordered. N-linked (GlcNAc...) asparagine glycosylation occurs at asparagine 989. Residues asparagine 1025 and asparagine 1045 are each glycosylated (N-linked (GlcNAc...) asparagine). Residues 1083–1103 (WVILLAVLAGLLVLALLVLLL) traverse the membrane as a helical segment. The Cytoplasmic segment spans residues 1104-1181 (WKMGFFKRAK…PDGHPGPGTA (78 aa)). Positions 1107-1111 (GFFKR) match the GFFKR motif motif. Positions 1138-1181 (EKTGTILRNNWGSPRREGPDAHPILAADGHPELGPDGHPGPGTA) are disordered. 3 tandem repeats follow at residues 1157 to 1160 (DAHP), 1165 to 1168 (DGHP), and 1173 to 1176 (DGHP). The tract at residues 1157-1176 (DAHPILAADGHPELGPDGHP) is 3 X 4 AA repeats of D-X-H-P.

The protein belongs to the integrin alpha chain family. As to quaternary structure, heterodimer of an alpha and a beta subunit. The alpha subunit is composed of a heavy and a light chain linked by a disulfide bond. Alpha-7 associates with beta-1. Interacts with COMP. Interacts (via C-terminus intracellular tail region) with CIB1; the interaction is stabilized/increased in a calcium- and magnesium-dependent manner. ADP-ribosylated on at least two sites of the extracellular domain in skeletal myotubes. Post-translationally, a 70 kDa form is created by proteolytic cleavage. Cleavage is elevated during myogenic differentiation and the cleaved form enhances cell adhesion and spreading on laminin. As to expression, isoforms containing segment A are predominantly expressed in skeletal muscle. Isoforms containing segment B are abundantly expressed in skeletal muscle, moderately in cardiac muscle, small intestine, colon, ovary and prostate and weakly in lung and testes. Isoforms containing segment X2D are expressed at low levels in fetal and adult skeletal muscle and in cardiac muscle, but are not detected in myoblasts and myotubes. In muscle fibers isoforms containing segment A and B are expressed at myotendinous and neuromuscular junctions; isoforms containing segment C are expressed at neuromuscular junctions and at extrasynaptic sites. Isoforms containing segments X1 or X2 or, at low levels, X1X2 are expressed in fetal and adult skeletal muscle (myoblasts and myotubes) and cardiac muscle.

The protein localises to the membrane. In terms of biological role, integrin alpha-7/beta-1 is the primary laminin receptor on skeletal myoblasts and adult myofibers. During myogenic differentiation, it may induce changes in the shape and mobility of myoblasts, and facilitate their localization at laminin-rich sites of secondary fiber formation. It is involved in the maintenance of the myofibers cytoarchitecture as well as for their anchorage, viability and functional integrity. Isoform Alpha-7X2B and isoform Alpha-7X1B promote myoblast migration on laminin 1 and laminin 2/4, but isoform Alpha-7X1B is less active on laminin 1 (In vitro). Acts as a Schwann cell receptor for laminin-2. Acts as a receptor of COMP and mediates its effect on vascular smooth muscle cells (VSMCs) maturation. Required to promote contractile phenotype acquisition in differentiated airway smooth muscle (ASM) cells. The sequence is that of Integrin alpha-7 (ITGA7) from Homo sapiens (Human).